The chain runs to 142 residues: Fluoride-specific ion channel FluC 1 (142 aa).

Transmembrane regions (helical) follow at residues V23 to D43, L54 to G74, G79 to F99, and L116 to L136. Positions 91 and 94 each coordinate Na(+).

This sequence belongs to the fluoride channel Fluc/FEX (TC 1.A.43) family.

The protein resides in the cell membrane. It carries out the reaction fluoride(in) = fluoride(out). Its activity is regulated as follows. Na(+) is not transported, but it plays an essential structural role and its presence is essential for fluoride channel function. Its function is as follows. Fluoride-specific ion channel. Important for reducing fluoride concentration in the cell, thus reducing its toxicity. In Nocardia farcinica (strain IFM 10152), this protein is Fluoride-specific ion channel FluC 1.